The primary structure comprises 123 residues: Small ribosomal subunit protein uS12cz/uS12cy (123 aa).

It belongs to the universal ribosomal protein uS12 family. Part of the 30S ribosomal subunit.

The protein resides in the plastid. It localises to the chloroplast. Its function is as follows. With S4 and S5 plays an important role in translational accuracy. Located at the interface of the 30S and 50S subunits. The sequence is that of Small ribosomal subunit protein uS12cz/uS12cy (rps12-A) from Atropa belladonna (Belladonna).